The following is a 92-amino-acid chain: Large ribosomal subunit protein bL28 (92 aa).

The tract at residues 1–34 is disordered; the sequence is MGRECEITGKKTMFGNNVPRKGLSRKKGGGGQHI.

This sequence belongs to the bacterial ribosomal protein bL28 family.

In Borrelia turicatae (strain 91E135), this protein is Large ribosomal subunit protein bL28.